A 321-amino-acid chain; its full sequence is L-carnitine dehydrogenase (321 aa).

Residue 14 to 19 coordinates NAD(+); that stretch reads GSGVIG.

The protein belongs to the 3-hydroxyacyl-CoA dehydrogenase family. L-carnitine dehydrogenase subfamily. As to quaternary structure, homodimer.

It is found in the cytoplasm. The catalysed reaction is carnitine + NAD(+) = 3-dehydrocarnitine + NADH + H(+). It functions in the pathway amine and polyamine metabolism; carnitine metabolism. Functionally, catalyzes the NAD(+)-dependent oxidation of L-carnitine to 3-dehydrocarnitine. In Pseudomonas putida (strain ATCC 47054 / DSM 6125 / CFBP 8728 / NCIMB 11950 / KT2440), this protein is L-carnitine dehydrogenase.